The chain runs to 361 residues: MSQKERPTFYRQEVNKTIWEVPVQYQNLSPVGSGAYGSVCSAFDAKTGFKVAVKKLSRPFQSIIHAKRTYRELRLLKHMRHENVIGLLDVFTPATSLKEFNDVYLVTHLMGADLNNIVKCQKLTDDHVQFLIYQILRGLKYIHSADIIHRDLKPSNLAVNEDCELKILDFGLARHTDDEMTGYVATRWYRAPEIMLNWMHYNVTVDIWSVGCIMAELLTGRTLFPGTDHINQLQQIMRLTGTPPSSLISRMPSHEARTYISSLPQMPKRNFADVFIGANPQAVDLLEKMLVLDTDKRITAAEALAHPYFAQYHDPDDEPEAEPFDQSFESRELDIEEWKRQTYEEMISFEPPVFDVDEMES.

Positions 25–309 constitute a Protein kinase domain; sequence YQNLSPVGSG…AAEALAHPYF (285 aa). ATP is bound by residues 31-39 and Lys54; that span reads VGSGAYGSV. Asp169 (proton acceptor) is an active-site residue. Thr181 is modified (phosphothreonine; by MAP2K3). The short motif at 181–183 is the TXY element; sequence TGY. Tyr183 carries the phosphotyrosine; by MAP2K3 modification.

It belongs to the protein kinase superfamily. CMGC Ser/Thr protein kinase family. MAP kinase subfamily. It depends on Mg(2+) as a cofactor. In terms of processing, dually phosphorylated on Thr-181 and Tyr-183, which activates the enzyme.

It is found in the cytoplasm. The protein resides in the nucleus. The catalysed reaction is L-seryl-[protein] + ATP = O-phospho-L-seryl-[protein] + ADP + H(+). The enzyme catalyses L-threonyl-[protein] + ATP = O-phospho-L-threonyl-[protein] + ADP + H(+). Activated by threonine and tyrosine phosphorylation by the dual specificity kinase, MKK3. Its function is as follows. Serine/threonine kinase which acts as an essential component of the MAP kinase signal transduction pathway. Mapk14a is one of the four p38 MAPKs which play an important role in the cascades of cellular responses evoked by extracellular stimuli such as pro-inflammatory cytokines or physical stress leading to direct activation of transcription factors. Accordingly, p38 MAPKs phosphorylate a broad range of proteins and it has been estimated that they may have approximately 200 to 300 substrates each. Some of the targets are downstream kinases which are activated through phosphorylation and further phosphorylate additional targets. Required for cytokinesis on the future dorsal side of the blastodisc, suggesting a role in symmetrical and synchronous blastomere cleavage. This Danio rerio (Zebrafish) protein is Mitogen-activated protein kinase 14A (mapk14a).